The sequence spans 562 residues: Phosphoacetylglucosamine mutase (562 aa).

S74 (phosphoserine intermediate) is an active-site residue. Mg(2+)-binding residues include S74, D291, D293, and D295. Residues 395–397 (EAN), 526–530 (RPSGT), and R535 each bind substrate.

The protein belongs to the phosphohexose mutase family. Mg(2+) is required as a cofactor.

The catalysed reaction is N-acetyl-alpha-D-glucosamine 1-phosphate = N-acetyl-D-glucosamine 6-phosphate. It participates in nucleotide-sugar biosynthesis; UDP-N-acetyl-alpha-D-glucosamine biosynthesis; N-acetyl-alpha-D-glucosamine 1-phosphate from alpha-D-glucosamine 6-phosphate (route I): step 2/2. Its function is as follows. Interconverts GlcNAc-6-P and GlcNAc-1-P. This Oryza sativa subsp. japonica (Rice) protein is Phosphoacetylglucosamine mutase.